A 721-amino-acid polypeptide reads, in one-letter code: Transcription activator of gluconeogenesis ARB_05058 (721 aa).

The span at Met-1–Met-34 shows a compositional bias: polar residues. The tract at residues Met-1–Lys-62 is disordered. Residues Thr-40 to Arg-55 show a composition bias toward basic and acidic residues. The zn(2)-C6 fungal-type DNA-binding region spans Cys-65–Cys-93. Disordered regions lie at residues Gln-128–Ala-224, Gly-263–Ala-300, Ser-353–Leu-400, Asn-533–Ser-567, and Gly-635–Trp-666. Polar residues-rich tracts occupy residues Gly-133 to Ala-213, Pro-267 to Ile-277, Leu-287 to Ala-300, and Met-361 to Asn-379. 2 stretches are compositionally biased toward low complexity: residues Ser-380–Gln-399 and Gly-543–Ser-553. Polar residues predominate over residues Ala-640–Arg-661.

Belongs to the ERT1/acuK family.

It localises to the nucleus. In terms of biological role, transcription factor which regulates nonfermentable carbon utilization. Activator of gluconeogenetic genes. The polypeptide is Transcription activator of gluconeogenesis ARB_05058 (Arthroderma benhamiae (strain ATCC MYA-4681 / CBS 112371) (Trichophyton mentagrophytes)).